The following is a 122-amino-acid chain: uncharacterized protein (122 aa).

This is an uncharacterized protein from Mycoplasma pneumoniae (strain ATCC 29342 / M129 / Subtype 1) (Mycoplasmoides pneumoniae).